We begin with the raw amino-acid sequence, 362 residues long: E3 ubiquitin-protein ligase TM129 (362 aa).

The Lumenal segment spans residues 1–6 (MESPAV). The chain crosses the membrane as a helical span at residues 7–27 (TFTLAYVVFSVCFVFTPNEFH). Residues 28-56 (SAGITVQNLLSGWLGSEDVAFVHYHIRRS) lie on the Cytoplasmic side of the membrane. The helical transmembrane segment at 57–77 (SATLLAHSLLPMGYFIGMCFA) threads the bilayer. The Lumenal portion of the chain corresponds to 78–94 (APEKELYNVHKAADGWK). A helical transmembrane segment spans residues 95–115 (VFVLMAVLLPIATSILAFYWS). Over 116-362 (QKRWSNHPLA…FCIVDVCIVR (247 aa)) the chain is Cytoplasmic. Residues 285–350 (CIGCMQTNAN…SSQVPCPTCR (66 aa)) form an RING-type; degenerate zinc finger.

This sequence belongs to the TMEM129 family. Integral component of ER-resident dislocation complexes.

The protein localises to the endoplasmic reticulum membrane. It carries out the reaction S-ubiquitinyl-[E2 ubiquitin-conjugating enzyme]-L-cysteine + [acceptor protein]-L-lysine = [E2 ubiquitin-conjugating enzyme]-L-cysteine + N(6)-ubiquitinyl-[acceptor protein]-L-lysine.. Its pathway is protein modification; protein ubiquitination. In terms of biological role, E3 ubiquitin-protein ligase involved in ER-associated protein degradation, preferentially associates with the E2 enzyme UBE2J2. This Xenopus laevis (African clawed frog) protein is E3 ubiquitin-protein ligase TM129 (tmem129).